The following is a 274-amino-acid chain: Large ribosomal subunit protein uL2 (274 aa).

2 disordered regions span residues 21–59 and 223–274; these read KVGLSKDEPEKSLTSGKKSSGGRNNHGRITTRHRGGGHK and VAMN…QLKG. The span at 32–42 shows a compositional bias: low complexity; it reads SLTSGKKSSGG. Over residues 45 to 59 the composition is skewed to basic residues; the sequence is NHGRITTRHRGGGHK. Basic and acidic residues predominate over residues 263-274; it reads KSSDKYIKQLKG.

This sequence belongs to the universal ribosomal protein uL2 family. In terms of assembly, part of the 50S ribosomal subunit. Forms a bridge to the 30S subunit in the 70S ribosome.

One of the primary rRNA binding proteins. Required for association of the 30S and 50S subunits to form the 70S ribosome, for tRNA binding and peptide bond formation. It has been suggested to have peptidyltransferase activity; this is somewhat controversial. Makes several contacts with the 16S rRNA in the 70S ribosome. In Wolbachia sp. subsp. Drosophila simulans (strain wRi), this protein is Large ribosomal subunit protein uL2.